Consider the following 253-residue polypeptide: Ribonuclease HII (253 aa).

An RNase H type-2 domain is found at 70–253; sequence DLIAGVDEVG…KTFAPIKDIL (184 aa). Residues D76, E77, and D168 each contribute to the a divalent metal cation site.

It belongs to the RNase HII family. Mn(2+) is required as a cofactor. Mg(2+) serves as cofactor.

It localises to the cytoplasm. It carries out the reaction Endonucleolytic cleavage to 5'-phosphomonoester.. In terms of biological role, endonuclease that specifically degrades the RNA of RNA-DNA hybrids. This is Ribonuclease HII from Leuconostoc mesenteroides subsp. mesenteroides (strain ATCC 8293 / DSM 20343 / BCRC 11652 / CCM 1803 / JCM 6124 / NCDO 523 / NBRC 100496 / NCIMB 8023 / NCTC 12954 / NRRL B-1118 / 37Y).